The primary structure comprises 395 residues: Elongation factor Tu (395 aa).

Residues lysine 10–glutamate 204 enclose the tr-type G domain. Positions glycine 19–threonine 26 are G1. Glycine 19–threonine 26 provides a ligand contact to GTP. Threonine 26 serves as a coordination point for Mg(2+). Residues glycine 60–asparagine 64 are G2. A G3 region spans residues aspartate 81–glycine 84. Residues aspartate 81–histidine 85 and asparagine 136–aspartate 139 contribute to the GTP site. The tract at residues asparagine 136 to aspartate 139 is G4. Positions serine 174–leucine 176 are G5.

The protein belongs to the TRAFAC class translation factor GTPase superfamily. Classic translation factor GTPase family. EF-Tu/EF-1A subfamily. In terms of assembly, monomer.

It localises to the cytoplasm. It catalyses the reaction GTP + H2O = GDP + phosphate + H(+). GTP hydrolase that promotes the GTP-dependent binding of aminoacyl-tRNA to the A-site of ribosomes during protein biosynthesis. This chain is Elongation factor Tu, found in Lactococcus lactis subsp. lactis (strain IL1403) (Streptococcus lactis).